Here is a 1143-residue protein sequence, read N- to C-terminus: Serine/threonine-protein kinase BRI1-like 2 (1143 aa).

The signal sequence occupies residues 1–31; that stretch reads MTTSPIRVRIRTRIQISFIFLLTHLSQSSSS. The Extracellular segment spans residues 32-756; the sequence is DQSSLKTDSL…GTRAASWANS (725 aa). The Cys pair 1 motif lies at 68–75; that stretch reads CQFSGVTC. 24 LRR repeats span residues 77–101, 102–125, 126–150, 151–175, 177–200, 203–227, 228–250, 251–275, 277–299, 300–324, 326–349, 351–373, 374–398, 399–422, 424–446, 447–470, 472–493, 494–518, 520–542, 570–594, 610–634, 635–660, 662–681, and 682–707; these read GGRV…AFTS, LDSL…LLLL, PLTL…FFSK, YSNL…LFLS, KKLQ…TIPL, CVSM…LINC, TNLK…SFGE, LKLL…IGDT, RSLQ…SLSS, CSWL…ILRS, GSLQ…ISAC, SLRI…LCPG, AASL…ISQC, SELR…IGNL, KLEQ…IGKL, QNLK…FFNC, NIEW…DFGI, LSRL…LGKC, TLVW…LGRQ, VGGL…KSCD, YQTI…IGEM, IALQ…QLKN, GVFD…SFSN, and LSFL…QLST. Residues Asn-84 and Asn-118 are each glycosylated (N-linked (GlcNAc...) asparagine). 4 N-linked (GlcNAc...) asparagine glycosylation sites follow: Asn-163, Asn-188, Asn-226, and Asn-234. N-linked (GlcNAc...) asparagine glycans are attached at residues Asn-288 and Asn-312. N-linked (GlcNAc...) asparagine glycosylation occurs at Asn-412. A glycan (N-linked (GlcNAc...) asparagine) is linked at Asn-469. An N-linked (GlcNAc...) asparagine glycan is attached at Asn-506. Asn-681 is a glycosylation site (N-linked (GlcNAc...) asparagine). The short motif at 720-727 is the Cys pair 2 element; sequence CGVPLPEC. Residues 757–777 form a helical membrane-spanning segment; the sequence is IVLGVLISAASVCILIVWAIA. The Cytoplasmic segment spans residues 778–1143; it reads VRARRRDADD…NNSHSHSNSL (366 aa). Position 835 is a phosphothreonine (Thr-835). Residues 838-1129 form the Protein kinase domain; that stretch reads FSAASMIGHG…LQVVASLREL (292 aa). ATP is bound by residues 844–852 and Lys-866; that span reads IGHGGFGEV. The residue at position 911 (Tyr-911) is a Phosphotyrosine. The Proton acceptor role is filled by Asp-966. At Ser-1001 the chain carries Phosphoserine. A Phosphotyrosine modification is found at Tyr-1009.

The protein belongs to the protein kinase superfamily. Ser/Thr protein kinase family. As to quaternary structure, interacts with TTL3. As to expression, expressed in provascular and procambial sites throughout plant development. Expressed throughout globe- to heart-staged embryos. Then, it is restricted to procambial cells by the late torpedo stage, and this pattern persists throughout the duration of embryo development. After germination, it is expressed not only in procambial cells throughout the plant but also in all lateral organ primordia before the onset of vascularization.

The protein resides in the cell membrane. It catalyses the reaction L-seryl-[protein] + ATP = O-phospho-L-seryl-[protein] + ADP + H(+). The enzyme catalyses L-threonyl-[protein] + ATP = O-phospho-L-threonyl-[protein] + ADP + H(+). Functionally, receptor with a serine/threonine-protein kinase activity, which may transduce extracellular spatial and temporal signals into downstream cell differentiation responses in provascular and procambial cells. In contrast to BRI1, BRL1 and BRL3, it does not bind brassinolide. The chain is Serine/threonine-protein kinase BRI1-like 2 from Arabidopsis thaliana (Mouse-ear cress).